Reading from the N-terminus, the 240-residue chain is Adiponectin (240 aa).

The N-terminal stretch at 1–17 is a signal peptide; sequence MLLQGALLLLLALPSHG. 5-hydroxylysine is present on Lys-28. An O-linked (Gal...) hydroxylysine glycan is attached at Lys-28. The segment at 29-100 is disordered; it reads GACAGWMAGI…GTPGRKGEPG (72 aa). Cys-31 carries the post-translational modification S-(2-succinyl)cysteine. A 4-hydroxyproline mark is found at Pro-39, Pro-42, and Pro-48. The Collagen-like domain maps to 43-102; it reads GHNGTPGRDGRDGTPGEKGEKGDPGLVGPKGDTGETGITGIEGPRGFPGTPGRKGEPGES. Residues 50–65 show a composition bias toward basic and acidic residues; sequence RDGRDGTPGEKGEKGD. 3 positions are modified to 5-hydroxylysine: Lys-60, Lys-63, and Lys-72. 3 O-linked (Gal...) hydroxylysine glycosylation sites follow: Lys-60, Lys-63, and Lys-72. Position 86 is a 4-hydroxyproline (Pro-86). Lys-96 bears the 5-hydroxylysine mark. Residue Lys-96 is glycosylated (O-linked (Gal...) hydroxylysine). The C1q domain maps to 103–240; it reads AYVYRSAFSV…GFLLYHNIVE (138 aa).

Homomultimer. Forms trimers, hexamers and 12- to 18-mers. The trimers (low molecular weight complexes / LMW) are assembled via non-covalent interactions of the collagen-like domains in a triple helix and hydrophobic interactions within the globular C1q domain. Several trimers can associate to form disulfide-linked hexamers (middle molecular weight complexes / MMW) and larger complexes (higher molecular weight / HMW). The HMW-complex assembly is also modulated by the degree of lysine hydroxylation and glycosylation. LMW, MMW and HMW complexes bind to HBEGF, MMW and HMW complexes bind to PDGFB, and HMW complex binds to FGF2. Interacts with CTRP9 via the C1q domain (heterotrimeric complex). In terms of processing, HMW complexes are more extensively glycosylated than smaller oligomers. Hydroxylation and glycosylation of the lysine residues within the collagen-like domain of adiponectin seem to be critically involved in regulating the formation and/or secretion of HMW complexes and consequently contribute to the insulin-sensitizing activity of adiponectin in hepatocytes. O-glycosylated. O-linked glycans on hydroxylysine residues consist of Glc-Gal disaccharides bound to the oxygen atom of post-translationally added hydroxyl groups. O-linked glycosylations elsewhere disialylated with the structure Neu5Acalpha2-&gt;8Neu5Acalpha2-&gt;3Gal. Sialylated by alpha 2,8-sialyltransferase III. Desialylated forms are rapidly cleared from the circulation. Not N-glycosylated. Post-translationally, succination of Cys-31 by the Krebs cycle intermediate fumarate, which leads to S-(2-succinyl)cysteine residues, inhibits polymerization and secretion of adiponectin. Adiponectin is a major target for succination in both adipocytes and adipose tissue of diabetic mammals. It was proposed that succination of proteins is a biomarker of mitochondrial stress and accumulation of Krebs cycle intermediates in adipose tissue in diabetes and that succination of adiponectin may contribute to the decrease in plasma adiponectin in diabetes.

Its subcellular location is the secreted. Polymerization and secretion of adiponectin is inhibited by succination of cysteine residues by the Krebs cycle intermediate fumarate, which leads to S-(2-succinyl)cysteine residues. Important adipokine involved in the control of fat metabolism and insulin sensitivity, with direct anti-diabetic, anti-atherogenic and anti-inflammatory activities. Stimulates AMPK phosphorylation and activation in the liver and the skeletal muscle, enhancing glucose utilization and fatty-acid combustion. Antagonizes TNF-alpha by negatively regulating its expression in various tissues such as liver and macrophages, and also by counteracting its effects. Inhibits endothelial NF-kappa-B signaling through a cAMP-dependent pathway. May play a role in cell growth, angiogenesis and tissue remodeling by binding and sequestering various growth factors with distinct binding affinities, depending on the type of complex, LMW, MMW or HMW. The polypeptide is Adiponectin (ADIPOQ) (Bos taurus (Bovine)).